A 130-amino-acid polypeptide reads, in one-letter code: Small ribosomal subunit protein uS9 (130 aa).

It belongs to the universal ribosomal protein uS9 family.

The chain is Small ribosomal subunit protein uS9 from Bacillus mycoides (strain KBAB4) (Bacillus weihenstephanensis).